The primary structure comprises 369 residues: uncharacterized protein (369 aa).

Low complexity predominate over residues 110–121 (ARPTDAFGAPIA). The segment at 110 to 172 (ARPTDAFGAP…PPPPASGGGA (63 aa)) is disordered. Residues 122-136 (PSEPTPASAPSPPKA) are compositionally biased toward pro residues.

This is an uncharacterized protein from Lymantria dispar multicapsid nuclear polyhedrosis virus (LdMNPV).